A 274-amino-acid chain; its full sequence is Diaminopimelate epimerase (274 aa).

Substrate is bound by residues asparagine 11, glutamine 44, and asparagine 64. Catalysis depends on cysteine 73, which acts as the Proton donor. Residues 74–75 (GN), asparagine 157, asparagine 190, and 208–209 (ER) contribute to the substrate site. Cysteine 217 acts as the Proton acceptor in catalysis. Substrate is bound at residue 218–219 (GS).

The protein belongs to the diaminopimelate epimerase family. In terms of assembly, homodimer.

The protein localises to the cytoplasm. It catalyses the reaction (2S,6S)-2,6-diaminopimelate = meso-2,6-diaminopimelate. It participates in amino-acid biosynthesis; L-lysine biosynthesis via DAP pathway; DL-2,6-diaminopimelate from LL-2,6-diaminopimelate: step 1/1. Its function is as follows. Catalyzes the stereoinversion of LL-2,6-diaminopimelate (L,L-DAP) to meso-diaminopimelate (meso-DAP), a precursor of L-lysine and an essential component of the bacterial peptidoglycan. This chain is Diaminopimelate epimerase, found in Actinobacillus pleuropneumoniae serotype 3 (strain JL03).